The primary structure comprises 347 residues: NADH-ubiquinone oxidoreductase chain 2 (347 aa).

Transmembrane regions (helical) follow at residues 1-21 (MNPF…MIVM), 59-79 (YFMT…INLL), 93-115 (TASM…HFWV), 149-169 (INPN…GWGG), 178-198 (IMAY…IYNP), 201-221 (TILN…MFAL), 239-259 (IITT…PLTG), 274-294 (DSII…YFYM), and 325-345 (LLPT…MLVV).

It belongs to the complex I subunit 2 family. Core subunit of respiratory chain NADH dehydrogenase (Complex I) which is composed of 45 different subunits. Interacts with TMEM242.

It is found in the mitochondrion inner membrane. It catalyses the reaction a ubiquinone + NADH + 5 H(+)(in) = a ubiquinol + NAD(+) + 4 H(+)(out). In terms of biological role, core subunit of the mitochondrial membrane respiratory chain NADH dehydrogenase (Complex I) which catalyzes electron transfer from NADH through the respiratory chain, using ubiquinone as an electron acceptor. Essential for the catalytic activity and assembly of complex I. The chain is NADH-ubiquinone oxidoreductase chain 2 from Hippopotamus amphibius (Hippopotamus).